We begin with the raw amino-acid sequence, 121 residues long: Large ribosomal subunit protein uL18 (121 aa).

This sequence belongs to the universal ribosomal protein uL18 family. Part of the 50S ribosomal subunit; part of the 5S rRNA/L5/L18/L25 subcomplex. Contacts the 5S and 23S rRNAs.

Functionally, this is one of the proteins that bind and probably mediate the attachment of the 5S RNA into the large ribosomal subunit, where it forms part of the central protuberance. In Paraburkholderia xenovorans (strain LB400), this protein is Large ribosomal subunit protein uL18.